Consider the following 432-residue polypeptide: Phosphomethylpyrimidine synthase (432 aa).

Residues Asn-66, Met-95, Tyr-124, His-163, Ser-185–Gly-187, Asp-226–Arg-229, and Glu-265 each bind substrate. His-269 is a binding site for Zn(2+). Tyr-292 serves as a coordination point for substrate. His-333 is a Zn(2+) binding site. The [4Fe-4S] cluster site is built by Cys-409, Cys-412, and Cys-416.

The protein belongs to the ThiC family. The cofactor is [4Fe-4S] cluster.

It catalyses the reaction 5-amino-1-(5-phospho-beta-D-ribosyl)imidazole + S-adenosyl-L-methionine = 4-amino-2-methyl-5-(phosphooxymethyl)pyrimidine + CO + 5'-deoxyadenosine + formate + L-methionine + 3 H(+). It functions in the pathway cofactor biosynthesis; thiamine diphosphate biosynthesis. In terms of biological role, catalyzes the synthesis of the hydroxymethylpyrimidine phosphate (HMP-P) moiety of thiamine from aminoimidazole ribotide (AIR) in a radical S-adenosyl-L-methionine (SAM)-dependent reaction. This chain is Phosphomethylpyrimidine synthase, found in Desulfitobacterium hafniense (strain DSM 10664 / DCB-2).